The sequence spans 855 residues: DNA mismatch repair protein MutS (855 aa).

613 to 620 lines the ATP pocket; the sequence is GPNMGGKS. Residues 796–817 form a disordered region; it reads TTSLPHEQPRAKPGKPAIPQQS.

This sequence belongs to the DNA mismatch repair MutS family.

In terms of biological role, this protein is involved in the repair of mismatches in DNA. It is possible that it carries out the mismatch recognition step. This protein has a weak ATPase activity. This Pseudomonas syringae pv. tomato (strain ATCC BAA-871 / DC3000) protein is DNA mismatch repair protein MutS.